The following is a 179-amino-acid chain: Large ribosomal subunit protein uL5 (179 aa).

Belongs to the universal ribosomal protein uL5 family. As to quaternary structure, part of the 50S ribosomal subunit; part of the 5S rRNA/L5/L18/L25 subcomplex. Contacts the 5S rRNA and the P site tRNA. Forms a bridge to the 30S subunit in the 70S ribosome.

Functionally, this is one of the proteins that bind and probably mediate the attachment of the 5S RNA into the large ribosomal subunit, where it forms part of the central protuberance. In the 70S ribosome it contacts protein S13 of the 30S subunit (bridge B1b), connecting the 2 subunits; this bridge is implicated in subunit movement. Contacts the P site tRNA; the 5S rRNA and some of its associated proteins might help stabilize positioning of ribosome-bound tRNAs. This is Large ribosomal subunit protein uL5 from Burkholderia mallei (strain NCTC 10247).